A 161-amino-acid chain; its full sequence is Pathogenesis-related protein 1 (161 aa).

The signal sequence occupies residues 1-26; sequence MNFTGYSRFLIVFVALVGALVLPSKA. Residues 34-149 form the SCP domain; sequence LRVHNQARGA…NGGTIISCNY (116 aa). 3 disulfides stabilise this stretch: C70–C138, C113–C117, and C133–C147.

It belongs to the CRISP family.

The protein resides in the secreted. It localises to the extracellular space. It is found in the apoplast. In terms of biological role, partially responsible for acquired pathogen resistance. This chain is Pathogenesis-related protein 1, found in Arabidopsis thaliana (Mouse-ear cress).